Here is a 59-residue protein sequence, read N- to C-terminus: Protein B3 (59 aa).

The chain is Protein B3 (B3) from Homo sapiens (Human).